The primary structure comprises 138 residues: Aspartate 1-decarboxylase (138 aa).

The active-site Schiff-base intermediate with substrate; via pyruvic acid is S25. S25 is modified (pyruvic acid (Ser)). T57 serves as a coordination point for substrate. Y58 functions as the Proton donor in the catalytic mechanism. 73 to 75 lines the substrate pocket; that stretch reads GAA. The disordered stretch occupies residues 116–138; it reads ELGGDPAQVPDGSGLKNPRHPEA.

This sequence belongs to the PanD family. In terms of assembly, heterooctamer of four alpha and four beta subunits. Pyruvate is required as a cofactor. In terms of processing, is synthesized initially as an inactive proenzyme, which is activated by self-cleavage at a specific serine bond to produce a beta-subunit with a hydroxyl group at its C-terminus and an alpha-subunit with a pyruvoyl group at its N-terminus.

It localises to the cytoplasm. It carries out the reaction L-aspartate + H(+) = beta-alanine + CO2. It participates in cofactor biosynthesis; (R)-pantothenate biosynthesis; beta-alanine from L-aspartate: step 1/1. Functionally, catalyzes the pyruvoyl-dependent decarboxylation of aspartate to produce beta-alanine. This Corynebacterium jeikeium (strain K411) protein is Aspartate 1-decarboxylase.